Consider the following 332-residue polypeptide: Glycerol-3-phosphate dehydrogenase [NAD(P)+] (332 aa).

Serine 11, phenylalanine 12, lysine 32, and lysine 106 together coordinate NADPH. Positions 106, 137, and 139 each coordinate sn-glycerol 3-phosphate. Alanine 141 lines the NADPH pocket. Sn-glycerol 3-phosphate is bound by residues lysine 192, aspartate 245, serine 255, arginine 256, and asparagine 257. Lysine 192 serves as the catalytic Proton acceptor. An NADPH-binding site is contributed by arginine 256. Positions 280 and 282 each coordinate NADPH.

This sequence belongs to the NAD-dependent glycerol-3-phosphate dehydrogenase family.

It is found in the cytoplasm. It carries out the reaction sn-glycerol 3-phosphate + NAD(+) = dihydroxyacetone phosphate + NADH + H(+). It catalyses the reaction sn-glycerol 3-phosphate + NADP(+) = dihydroxyacetone phosphate + NADPH + H(+). It functions in the pathway membrane lipid metabolism; glycerophospholipid metabolism. Its function is as follows. Catalyzes the reduction of the glycolytic intermediate dihydroxyacetone phosphate (DHAP) to sn-glycerol 3-phosphate (G3P), the key precursor for phospholipid synthesis. The sequence is that of Glycerol-3-phosphate dehydrogenase [NAD(P)+] from Staphylococcus aureus (strain Mu3 / ATCC 700698).